The primary structure comprises 889 residues: Coatomer subunit gamma-2 (889 aa).

HEAT repeat units lie at residues 67-102 (VEAT…SPSA), 103-140 (DEVI…STLL), 289-326 (RELT…THPL), 328-360 (VTNC…TGNE), and 361-398 (SSVD…KFPL). A disordered region spans residues 596–617 (PLAEKKTTGKKPTGPASALSGP).

Belongs to the COPG family. Oligomeric complex that consists of at least the alpha, beta, beta', gamma, delta, epsilon and zeta subunits.

It localises to the cytoplasm. Its subcellular location is the golgi apparatus membrane. The protein localises to the cytoplasmic vesicle. It is found in the COPI-coated vesicle membrane. The coatomer is a cytosolic protein complex that binds to dilysine motifs and reversibly associates with Golgi non-clathrin-coated vesicles, which further mediate biosynthetic protein transport from the ER, via the Golgi up to the trans Golgi network. Coatomer complex is required for budding from Golgi membranes, and is essential for the retrograde Golgi-to-ER transport of dilysine-tagged proteins. This Oryza sativa subsp. japonica (Rice) protein is Coatomer subunit gamma-2.